The primary structure comprises 86 residues: Trypsin inhibitor (86 aa).

2 cysteine pairs are disulfide-bonded: cysteine 8/cysteine 65 and cysteine 49/cysteine 58.

In terms of biological role, serine protease inhibitor which is active against trypsin. Displays strong antifungal activity against a number of phytopathogenic fungi including M.melonis, A.cucumerina, A.solani, C.glaeosporioides and P.capsici. In Fagopyrum tataricum (Tartarian buckwheat), this protein is Trypsin inhibitor.